A 525-amino-acid chain; its full sequence is GMP synthase [glutamine-hydrolyzing] (525 aa).

Residues 3 to 200 (KILILDFGSQ…VLHVAGCKPS (198 aa)) form the Glutamine amidotransferase type-1 domain. The active-site Nucleophile is Cys-79. Active-site residues include His-174 and Glu-176. A GMPS ATP-PPase domain is found at 201–393 (WTMPNYIDEA…LGLPHDMVYR (193 aa)). ATP is bound at residue 228 to 234 (SGGVDSS).

As to quaternary structure, homodimer.

The enzyme catalyses XMP + L-glutamine + ATP + H2O = GMP + L-glutamate + AMP + diphosphate + 2 H(+). The protein operates within purine metabolism; GMP biosynthesis; GMP from XMP (L-Gln route): step 1/1. In terms of biological role, catalyzes the synthesis of GMP from XMP. The polypeptide is GMP synthase [glutamine-hydrolyzing] (Chromobacterium violaceum (strain ATCC 12472 / DSM 30191 / JCM 1249 / CCUG 213 / NBRC 12614 / NCIMB 9131 / NCTC 9757 / MK)).